Reading from the N-terminus, the 650-residue chain is Macrolide export ATP-binding/permease protein MacB (650 aa).

In terms of domain architecture, ABC transporter spans 6–244 (LKLTGITRRF…ASSPEAASSP (239 aa)). 42–49 (GASGSGKS) lines the ATP pocket. The disordered stretch occupies residues 227–246 (QTRPEEATASSPEAASSPAT). Low complexity predominate over residues 233–246 (ATASSPEAASSPAT). 4 consecutive transmembrane segments (helical) span residues 275 to 295 (FLTM…VALG), 523 to 543 (LTLL…IGVM), 580 to 600 (LVCL…GVLF), and 615 to 635 (SIIA…FFPA).

The protein belongs to the ABC transporter superfamily. Macrolide exporter (TC 3.A.1.122) family. In terms of assembly, homodimer. Part of the tripartite efflux system MacAB-TolC, which is composed of an inner membrane transporter, MacB, a periplasmic membrane fusion protein, MacA, and an outer membrane component, TolC. The complex forms a large protein conduit and can translocate molecules across both the inner and outer membranes. Interacts with MacA.

It is found in the cell inner membrane. Its function is as follows. Part of the tripartite efflux system MacAB-TolC. MacB is a non-canonical ABC transporter that contains transmembrane domains (TMD), which form a pore in the inner membrane, and an ATP-binding domain (NBD), which is responsible for energy generation. Confers resistance against macrolides. The chain is Macrolide export ATP-binding/permease protein MacB from Pectobacterium atrosepticum (strain SCRI 1043 / ATCC BAA-672) (Erwinia carotovora subsp. atroseptica).